Reading from the N-terminus, the 376-residue chain is Chaperone protein DnaJ (376 aa).

Residues 5-70 (DFYDVLGVSK…EKKQNYDNFG (66 aa)) enclose the J domain. The CR-type zinc finger occupies 137-215 (GKKQDIKFST…CNGQGNKQAS (79 aa)). Residues Cys-150, Cys-153, Cys-167, Cys-170, Cys-189, Cys-192, Cys-203, and Cys-206 each contribute to the Zn(2+) site. 4 CXXCXGXG motif repeats span residues 150-157 (CNTCNGNG), 167-174 (CTVCGGNG), 189-196 (CPQCAGSG), and 203-210 (CTDCNGQG).

Belongs to the DnaJ family. Homodimer. Zn(2+) is required as a cofactor.

The protein localises to the cytoplasm. Functionally, participates actively in the response to hyperosmotic and heat shock by preventing the aggregation of stress-denatured proteins and by disaggregating proteins, also in an autonomous, DnaK-independent fashion. Unfolded proteins bind initially to DnaJ; upon interaction with the DnaJ-bound protein, DnaK hydrolyzes its bound ATP, resulting in the formation of a stable complex. GrpE releases ADP from DnaK; ATP binding to DnaK triggers the release of the substrate protein, thus completing the reaction cycle. Several rounds of ATP-dependent interactions between DnaJ, DnaK and GrpE are required for fully efficient folding. Also involved, together with DnaK and GrpE, in the DNA replication of plasmids through activation of initiation proteins. This chain is Chaperone protein DnaJ, found in Pelagibacter ubique (strain HTCC1062).